Here is a 427-residue protein sequence, read N- to C-terminus: Interferon regulatory factor 3 (427 aa).

Residue threonine 3 is modified to Phosphothreonine. The IRF tryptophan pentad repeat DNA-binding region spans lysine 5–asparagine 111. Serine 14 carries the phosphoserine modification. A Phosphothreonine modification is found at threonine 75. Over residues arginine 91–tyrosine 107 the composition is skewed to basic and acidic residues. The tract at residues arginine 91–glutamine 136 is disordered. Phosphoserine occurs at positions 97 and 123. The short motif at isoleucine 139–leucine 149 is the Nuclear export signal element. The tract at residues aspartate 141 to serine 427 is mediates interaction with ZDHHC11. The residue at position 175 (serine 175) is a (Microbial infection) Phosphoserine. Phosphothreonine is present on threonine 180. Serine 188 bears the Phosphoserine mark. Lysine 193 is covalently cross-linked (Glycyl lysine isopeptide (Lys-Gly) (interchain with G-Cter in ISG15)). The segment at glutamate 200–lysine 360 is interaction with HERC5. Phosphothreonine is present on residues threonine 237, threonine 244, and threonine 253. A disulfide bond links cysteine 267 and cysteine 289. Glycyl lysine isopeptide (Lys-Gly) (interchain with G-Cter in ISG15) cross-links involve residues lysine 360 and lysine 366. N6-acetyllysine is present on lysine 366. Residue serine 385 is modified to Phosphoserine. Diphosphoserine is present on serine 386. Residue serine 386 is modified to Phosphoserine; by TBK1. Serine 396 is modified (phosphoserine; by IKKE and TBK1). At serine 398 the chain carries Phosphoserine. Position 404 is a phosphothreonine (threonine 404). Serine 427 bears the Phosphoserine mark.

Belongs to the IRF family. Monomer. Homodimer; phosphorylation-induced. Interacts (when phosphorylated) with CREBBP. Interacts with MAVS (via phosphorylated pLxIS motif). Interacts with TICAM1 (via phosphorylated pLxIS motif). Interacts with STING1 (via phosphorylated pLxIS motif). Interacts with IKBKE and TBK1. Interacts with TICAM2. Interacts with RBCK1. Interacts with HERC5. Interacts with DDX3X (phosphorylated at 'Ser-102'); the interaction allows the phosphorylation and activation of IRF3 by IKBKE. Interacts with TRIM21 and ULK1, in the presence of TRIM21; this interaction leads to IRF3 degradation by autophagy. Interacts with RIOK3; RIOK3 probably mediates the interaction of TBK1 with IRF3. Interacts with ILRUN; the interaction inhibits IRF3 binding to its DNA consensus sequence. Interacts with LYAR; this interaction impairs IRF3 DNA-binding activity. Interacts with TRAF3. Interacts with ZDHHC11; ZDHHC11 recruits IRF3 to STING1 upon DNA virus infection and thereby promotes IRF3 activation. Interacts with HSP90AA1; the interaction mediates IRF3 association with TOMM70. Interacts with BCL2; the interaction decreases upon Sendai virus infection. Interacts with BAX; the interaction is direct, increases upon Sendai virus infection and mediates the formation of the apoptosis complex TOMM70:HSP90AA1:IRF3:BAX. Interacts with DDX56. Interacts with NBR1. As to quaternary structure, (Microbial infection) Interacts with rotavirus A NSP1 (via pLxIS motif); this interaction leads to the proteasome-dependent degradation of IRF3. In terms of assembly, (Microbial infection) Interacts with herpes virus 8/HHV-8 protein VIRF1. (Microbial infection) Interacts with Seneca Valley virus protease 3C; this interaction is involved in the suppression of IRF3 expression and phosphorylation by the virus. As to quaternary structure, (Microbial infection) Interacts with herpes virus 2/HHV-2 protein ICP27; this interaction inhibits IRF3 phosphorylation and nuclear translocation. In terms of assembly, (Microbial infection) Interacts with human cytomegalovirus protein UL44; this interaction prevents IRF3 binding to its promoters. (Microbial infection) Interacts with the two fragments of MERS-COV protein N produced by CASP6 through proteolytic cleavage; both interactions inhibit IRF3 nuclear translocation after activation and IFN signaling. Post-translationally, constitutively phosphorylated on many Ser/Thr residues. Activated following phosphorylation by TBK1 and IKBKE. Innate adapter proteins, such as MAVS, STING1 or TICAM1, are first activated by viral RNA, cytosolic DNA, and bacterial lipopolysaccharide (LPS), respectively, leading to activation of the kinases TBK1 and IKBKE. These kinases then phosphorylate the adapter proteins on the pLxIS motif, leading to recruitment of IRF3, thereby licensing IRF3 for phosphorylation by TBK1. Phosphorylation at Ser-386 is followed by pyrophosphorylation at the same residue, promoting phosphorylation at Ser-396. Phosphorylated IRF3 dissociates from the adapter proteins, dimerizes, and then enters the nucleus to induce IFNs. In terms of processing, pyrophosphorylated by UAP1 following phosphorylation at Ser-386 by TBK1. Pyrophosphorylation promotes subsequent phosphorylation at Ser-396, leading to homodimerization of IRF3. Acetylation at Lys-366 by KAT8 inhibits recruimtent to promoters and transcription factor activity. Acetylation by KAT8 is promoted by phosphorylation at Ser-396. Post-translationally, ubiquitinated; ubiquitination involves RBCK1 leading to proteasomal degradation. Polyubiquitinated; ubiquitination involves TRIM21 leading to proteasomal degradation. Ubiquitinated by UBE3C, leading to its degradation. Deubiquitinated by USP5 on both 'Lys-48'-linked unanchored and 'Lys-63'-linked anchored polyubiquitin, leading to inhibition of anti-RNA viral innate immunity. In terms of processing, ISGylated by HERC5 resulting in sustained IRF3 activation and in the inhibition of IRF3 ubiquitination by disrupting PIN1 binding. The phosphorylation state of IRF3 does not alter ISGylation. Proteolytically cleaved by apoptotic caspases during apoptosis, leading to its inactivation. Cleavage by CASP3 during virus-induced apoptosis inactivates it, preventing cytokine overproduction. Post-translationally, (Microbial infection) ISGylated. ISGylation is cleaved and removed by SARS-COV-2 nsp3 which attenuates type I interferon responses. In terms of processing, (Microbial infection) Phosphorylation and subsequent activation of IRF3 is inhibited by vaccinia virus protein E3. (Microbial infection) Phosphorylated by herpes simplex virus 1/HHV-1 US3 at Ser-175 to prevent IRF3 activation. Expressed constitutively in a variety of tissues.

Its subcellular location is the cytoplasm. It localises to the nucleus. The protein resides in the mitochondrion. Its activity is regulated as follows. In the absence of viral infection, maintained as a monomer in an autoinhibited state. Phosphorylation by TBK1 and IKBKE disrupts this autoinhibition leading to the liberation of the DNA-binding and dimerization activities and its nuclear localization where it can activate type I IFN and ISG genes. Phosphorylation and activation follow the following steps: innate adapter proteins, such as MAVS, STING1 or TICAM1, are first activated by viral RNA, cytosolic DNA and bacterial lipopolysaccharide (LPS), respectively, leading to activation of the kinases TBK1 and IKBKE. These kinases then phosphorylate the adapter proteins on their pLxIS motif, leading to recruitment of IRF3, thereby licensing IRF3 for phosphorylation by TBK1. Phosphorylated IRF3 dissociates from the adapter proteins, dimerizes, and then enters the nucleus to induce IFNs. (Microbial infection) Activated upon coronavirus SARS-CoV-2 infection. In terms of biological role, key transcriptional regulator of type I interferon (IFN)-dependent immune responses which plays a critical role in the innate immune response against DNA and RNA viruses. Regulates the transcription of type I IFN genes (IFN-alpha and IFN-beta) and IFN-stimulated genes (ISG) by binding to an interferon-stimulated response element (ISRE) in their promoters. Acts as a more potent activator of the IFN-beta (IFNB) gene than the IFN-alpha (IFNA) gene and plays a critical role in both the early and late phases of the IFNA/B gene induction. Found in an inactive form in the cytoplasm of uninfected cells and following viral infection, double-stranded RNA (dsRNA), or toll-like receptor (TLR) signaling, is phosphorylated by IKBKE and TBK1 kinases. This induces a conformational change, leading to its dimerization and nuclear localization and association with CREB binding protein (CREBBP) to form dsRNA-activated factor 1 (DRAF1), a complex which activates the transcription of the type I IFN and ISG genes. Can activate distinct gene expression programs in macrophages and can induce significant apoptosis in primary macrophages. In response to Sendai virus infection, is recruited by TOMM70:HSP90AA1 to mitochondrion and forms an apoptosis complex TOMM70:HSP90AA1:IRF3:BAX inducing apoptosis. Key transcription factor regulating the IFN response during SARS-CoV-2 infection. This is Interferon regulatory factor 3 from Homo sapiens (Human).